The primary structure comprises 661 residues: Galactan 5-O-arabinofuranosyltransferase (661 aa).

The next 13 membrane-spanning stretches (helical) occupy residues 26-46 (LVAI…LWMG), 64-84 (VASA…WLWL), 108-128 (ALTY…VLAI), 194-214 (AFQP…VPVW), 217-237 (ITGS…IILA), 243-263 (PYAA…SRIA), 265-285 (GDKF…TFYT), 286-306 (LFTG…AAIV), 312-332 (PLLW…ISWG), 362-382 (VPFL…IYLV), 393-413 (MWVG…ITLL), 418-438 (LGFR…VLGI), and 458-478 (TATH…LYYA).

Belongs to the glycosyltransferase 85 family.

It is found in the cell membrane. The catalysed reaction is Adds an alpha-D-arabinofuranosyl group from trans,octacis-decaprenylphospho-beta-D-arabinofuranose at the 5-O-position of the eighth, tenth and twelfth galactofuranose unit of the galactofuranan chain of [beta-D-galactofuranosyl-(1-&gt;5)-beta-D-galactofuranosyl-(1-&gt;6)]14-beta-D-galactofuranosyl-(1-&gt;5)-beta-D-galactofuranosyl-(1-&gt;4)-alpha-L-rhamnopyranosyl-(1-&gt;3)-N-acetyl-alpha-D-glucosaminyl-diphospho-trans,octacis-decaprenol.. Its pathway is cell wall biogenesis; cell wall polysaccharide biosynthesis. In terms of biological role, involved in the biosynthesis of the arabinogalactan (AG) region of the mycolylarabinogalactan-peptidoglycan (mAGP) complex, an essential component of the cell wall. Catalyzes the addition of the first key arabinofuranosyl (Araf) residue from the sugar donor decaprenyl-phospho-arabinose (DPA) on the C-5 of a 6-linked galactofuranosyl (Galf) of the galactan domain, thus 'priming' the galactan for further elaboration by other arabinofuranosyltransferases. In Corynebacterium glutamicum (strain ATCC 13032 / DSM 20300 / JCM 1318 / BCRC 11384 / CCUG 27702 / LMG 3730 / NBRC 12168 / NCIMB 10025 / NRRL B-2784 / 534), this protein is Galactan 5-O-arabinofuranosyltransferase.